The sequence spans 309 residues: Taste receptor type 2 member 64 (309 aa).

The Extracellular portion of the chain corresponds to 1 to 3 (MVY). The helical transmembrane segment at 4 to 26 (FLLIILSILVVFAFVLGNFSNGF) threads the bilayer. Residues 27–46 (VALVNVIDWVKTRKISSADQ) lie on the Cytoplasmic side of the membrane. Residues 47 to 69 (ILTALVVSRIGLLWVILFHWYAN) form a helical membrane-spanning segment. Topologically, residues 70–83 (VFNSALYSSEVGAV) are extracellular. The helical transmembrane segment at 84 to 106 (ASNISAIINHFSIWLAASLGIFY) threads the bilayer. At 107 to 126 (LLKIANFSNLIFLHLKKRIR) the chain is on the cytoplasmic side. The helical transmembrane segment at 127–149 (SVVLVILLGPLVFLICNLAVITM) threads the bilayer. Over 150–176 (DERVWTKEYEGNVTWKIKLRNAIHLSD) the chain is Extracellular. The N-linked (GlcNAc...) asparagine glycan is linked to Asn161. Residues 177–199 (LTVSTLANLIPFILTLICFLLLI) traverse the membrane as a helical segment. The Cytoplasmic segment spans residues 200–230 (CSLHKHLKKMQLHGKGSQDLSTKVHIKALQT). A helical transmembrane segment spans residues 231-253 (VISFLMLYAIYFLYLITLTWNLW). Residues 254 to 258 (TQQNK) are Extracellular-facing. A helical membrane pass occupies residues 259-281 (LVFLLCQTLGIMYPSFHSFFLIM). The Cytoplasmic segment spans residues 282-309 (GSRKLKQTFLSVLCQVTCLVKGQQPSTP).

It belongs to the G-protein coupled receptor T2R family.

The protein localises to the membrane. In terms of biological role, receptor that may play a role in the perception of bitterness and is gustducin-linked. May play a role in sensing the chemical composition of the gastrointestinal content. The activity of this receptor may stimulate alpha gustducin, mediate PLC-beta-2 activation and lead to the gating of TRPM5. The protein is Taste receptor type 2 member 64 (TAS2R64) of Pan paniscus (Pygmy chimpanzee).